Consider the following 246-residue polypeptide: Ribonuclease PH (246 aa).

Phosphate is bound by residues R91 and 129-131; that span reads GTR.

The protein belongs to the RNase PH family. As to quaternary structure, homohexameric ring arranged as a trimer of dimers.

The enzyme catalyses tRNA(n+1) + phosphate = tRNA(n) + a ribonucleoside 5'-diphosphate. Phosphorolytic 3'-5' exoribonuclease that plays an important role in tRNA 3'-end maturation. Removes nucleotide residues following the 3'-CCA terminus of tRNAs; can also add nucleotides to the ends of RNA molecules by using nucleoside diphosphates as substrates, but this may not be physiologically important. Probably plays a role in initiation of 16S rRNA degradation (leading to ribosome degradation) during starvation. This Burkholderia orbicola (strain MC0-3) protein is Ribonuclease PH.